The primary structure comprises 276 residues: MLCEDQHMSVENTPQKGSGSLNSSASSISIDVKPTMQSWAQEVRAEFGHSDEASSSLNSSAASCGSLAKKETADGNLESKDGEGREMAFEFLDGVNEVKFERLVKEEKLKTPYKRRHSFTPPSNENSRSNSPNSSNSSANGDAAAPKGGNNPHSRNSKKSGNFRAHKEEKRVRHNSYTSSTSSSSSYTEADPAILSRRQKQIDYGKNTAAYERYVEMVPKDERTRDHPRTPNKYGKYSRRAFDGLVKIWRKSLHIYDPPTQARDTAKDSNSDSDSD.

Disordered stretches follow at residues Met-1–Thr-35, Ser-50–Glu-83, Val-104–Lys-236, and His-254–Asp-276. Composition is skewed to low complexity over residues Ser-18 to Ser-29 and Ala-53 to Leu-67. Ser-24 and Ser-29 each carry phosphoserine. Positions Ala-68–Glu-83 are enriched in basic and acidic residues. Ser-118 is subject to Phosphoserine. Position 120 is a phosphothreonine (Thr-120). Composition is skewed to low complexity over residues Pro-121–Pro-146 and Ser-176–Thr-188. A phosphoserine mark is found at Ser-123, Ser-127, and Ser-131. Tyr-177 is subject to Phosphotyrosine. Phosphoserine is present on Ser-182. The tract at residues Asp-191–Thr-260 is RNA-binding. Positions Arg-213–Arg-229 are enriched in basic and acidic residues.

Belongs to the SLBP family. As to quaternary structure, interacts with Sym and Cpsf73. In terms of tissue distribution, in late embryos, expression is restricted to proliferating (CNS and PNS) and endoreplicating (midgut) cell populations.

Its function is as follows. Involved in histone pre-mRNA 3' processing and couples histone mRNA production with the cell cycle. Both maternal and zygotic proteins play an essential and vital function for development. The polypeptide is Histone RNA hairpin-binding protein (Slbp) (Drosophila melanogaster (Fruit fly)).